Here is a 215-residue protein sequence, read N- to C-terminus: Probable transaldolase (215 aa).

Lys83 acts as the Schiff-base intermediate with substrate in catalysis.

Belongs to the transaldolase family. Type 3B subfamily.

It localises to the cytoplasm. The catalysed reaction is D-sedoheptulose 7-phosphate + D-glyceraldehyde 3-phosphate = D-erythrose 4-phosphate + beta-D-fructose 6-phosphate. It functions in the pathway carbohydrate degradation; pentose phosphate pathway; D-glyceraldehyde 3-phosphate and beta-D-fructose 6-phosphate from D-ribose 5-phosphate and D-xylulose 5-phosphate (non-oxidative stage): step 2/3. Its function is as follows. Transaldolase is important for the balance of metabolites in the pentose-phosphate pathway. The protein is Probable transaldolase of Clostridium perfringens (strain ATCC 13124 / DSM 756 / JCM 1290 / NCIMB 6125 / NCTC 8237 / Type A).